Reading from the N-terminus, the 331-residue chain is FMRFamide-related neuropeptides (331 aa).

Residues 1-25 (MRCWSPCSLLVVIAIYCLSSHTSEA) form the signal peptide. Residues 26 to 65 (FDLAQACVESQRLSLLPICDTIFAVQQEGAQQSADDGLRS) constitute a propeptide that is removed on maturation. A phenylalanine amide mark is found at Phe-71 and Phe-83. Positions 86–94 (NVPDLPFED) are excised as a propeptide. Phe-100 carries the phenylalanine amide modification. Residues 103–168 (AAPQLDDLLK…YVDDVEDSDV (66 aa)) constitute a propeptide that is removed on maturation. The tract at residues 122-153 (QKSDDTSVRRKRSTDAAPQSNTDSAEQKNDSA) is disordered. Phenylalanine amide occurs at positions 174 and 181. A propeptide spanning residues 184 to 194 (NPSDVGSKLTE) is cleaved from the precursor. Position 200 is a phenylalanine amide (Phe-200). Residues 203–205 (DPE) constitute a propeptide that is removed on maturation. Phe-211 bears the Phenylalanine amide mark. Positions 214–216 (SDD) are excised as a propeptide. Phe-222 carries the phenylalanine amide modification. Positions 225–236 (NPGDAEDELEED) are excised as a propeptide. The residue at position 242 (Phe-242) is a Phenylalanine amide. Positions 245 to 254 (GDEEDEEEAE) are excised as a propeptide. Phe-260 carries the phenylalanine amide modification. A propeptide spanning residues 263-265 (DPE) is cleaved from the precursor. At Phe-271 the chain carries Phenylalanine amide. The propeptide occupies 274 to 277 (NGEE). A Phenylalanine amide modification is found at Phe-283. The propeptide occupies 286–293 (NPEEPEAD). Phenylalanine amide is present on Phe-299. Positions 302–312 (GGEEDDVNTEE) are excised as a propeptide. Residue Phe-318 is modified to Phenylalanine amide. A propeptide spanning residues 321-331 (SAEKCKGCLEG) is cleaved from the precursor.

This sequence belongs to the FARP (FMRFamide related peptide) family. As to expression, present ubiquitously in the brain and regions of the central nervous system as well as in the periphery and throughout the dermal chromatophore layer (at protein level).

Its subcellular location is the secreted. Functionally, excitatory neurotransmitters that directly modulate chromatophore function by activating chromatophore expansion at the chromatophore neuromuscular junction. This is FMRFamide-related neuropeptides from Sepia officinalis (Common cuttlefish).